The following is a 227-amino-acid chain: Chaperone protein FocC (227 aa).

A signal peptide spans 1 to 21 (MRIWAVLASFLVFFYIPQSYA).

The protein belongs to the periplasmic pilus chaperone family.

Its subcellular location is the periplasm. In terms of biological role, involved in the biogenesis of the F1C fimbriae. The polypeptide is Chaperone protein FocC (focC) (Escherichia coli O6:H1 (strain CFT073 / ATCC 700928 / UPEC)).